The sequence spans 273 residues: SET domain-containing protein 9 (273 aa).

An SET domain is found at 96–269 (FSVAQATSSL…QGEELFSNYY (174 aa)). Residue Tyr-268 participates in S-adenosyl-L-methionine binding.

This sequence belongs to the class V-like SAM-binding methyltransferase superfamily.

The polypeptide is SET domain-containing protein 9 (SETD9) (Pongo abelii (Sumatran orangutan)).